Reading from the N-terminus, the 220-residue chain is Deoxyribose-phosphate aldolase (220 aa).

Asp-89 serves as the catalytic Proton donor/acceptor. Lys-151 functions as the Schiff-base intermediate with acetaldehyde in the catalytic mechanism. Residue Lys-180 is the Proton donor/acceptor of the active site.

The protein belongs to the DeoC/FbaB aldolase family. DeoC type 1 subfamily.

It is found in the cytoplasm. The enzyme catalyses 2-deoxy-D-ribose 5-phosphate = D-glyceraldehyde 3-phosphate + acetaldehyde. Its pathway is carbohydrate degradation; 2-deoxy-D-ribose 1-phosphate degradation; D-glyceraldehyde 3-phosphate and acetaldehyde from 2-deoxy-alpha-D-ribose 1-phosphate: step 2/2. Functionally, catalyzes a reversible aldol reaction between acetaldehyde and D-glyceraldehyde 3-phosphate to generate 2-deoxy-D-ribose 5-phosphate. This chain is Deoxyribose-phosphate aldolase, found in Mycoplasmopsis pulmonis (strain UAB CTIP) (Mycoplasma pulmonis).